A 259-amino-acid chain; its full sequence is L-erythrulose-1-phosphate isomerase (259 aa).

His-102 serves as the catalytic Electrophile. The active-site Proton acceptor is the Glu-174.

This sequence belongs to the triosephosphate isomerase family.

It catalyses the reaction L-erythrulose 1-phosphate = D-erythrulose 4-phosphate. It functions in the pathway carbohydrate metabolism. In terms of biological role, involved in catabolism of D-apiose. Catalyzes the isomerization of L-erythrulose 1-phosphate to D-erythrulose 4-phosphate. This chain is L-erythrulose-1-phosphate isomerase, found in Pectobacterium atrosepticum (strain SCRI 1043 / ATCC BAA-672) (Erwinia carotovora subsp. atroseptica).